A 407-amino-acid chain; its full sequence is Probable succinyl-diaminopimelate desuccinylase (407 aa).

Position 72 (histidine 72) interacts with Zn(2+). The active site involves aspartate 74. Aspartate 105 is a binding site for Zn(2+). Glutamate 139 acts as the Proton acceptor in catalysis. Zn(2+) is bound by residues glutamate 140, glutamate 165, and histidine 378.

The protein belongs to the peptidase M20A family. It depends on Zn(2+) as a cofactor. Co(2+) is required as a cofactor.

It carries out the reaction N-succinyl-(2S,6S)-2,6-diaminopimelate + H2O = (2S,6S)-2,6-diaminopimelate + succinate. Its pathway is amino-acid biosynthesis; L-lysine biosynthesis via DAP pathway; LL-2,6-diaminopimelate from (S)-tetrahydrodipicolinate (succinylase route): step 3/3. The protein is Probable succinyl-diaminopimelate desuccinylase (dapE) of Staphylococcus aureus (strain MRSA252).